An 86-amino-acid polypeptide reads, in one-letter code: Neurotoxin 3FTx-LT (86 aa).

Residues 1–21 form the signal peptide; that stretch reads MKTLLLTLVVVTIVCLDLGYT. 5 disulfides stabilise this stretch: cysteine 24–cysteine 45, cysteine 27–cysteine 32, cysteine 38–cysteine 63, cysteine 67–cysteine 78, and cysteine 79–cysteine 84.

As to expression, expressed by the venom gland.

The protein resides in the secreted. Functionally, binds with low affinity to muscular (alpha-1-beta-1-delta-epsilon/CHRNA1-CHRNB1-CHRND-CHRNE) and very low affinity to neuronal (alpha-7/CHRNA7) nicotinic acetylcholine receptor (nAChR). The sequence is that of Neurotoxin 3FTx-LT from Bungarus fasciatus (Banded krait).